The sequence spans 840 residues: SLIT and NTRK-like protein 6 (840 aa).

The signal sequence occupies residues 1 to 18 (MKLWTYLLYPSLLACLSL). In terms of domain architecture, LRRNT 1 spans 22–67 (SPMPSVRGSCDTLCNCEEKDGIMIINCEEKGINKLSQISVPPSRPF). Over 23–609 (PMPSVRGSCD…LTDAVPLSVL (587 aa)) the chain is Extracellular. LRR repeat units follow at residues 89-110 (NALS…AFNG), 113-134 (LLKQ…TFHG), 137-158 (NLEF…AFSK), 161-182 (RLKV…IFRF), and 184-205 (PLTH…GFLE). The 52-residue stretch at 218-269 (NKWACNCELLQLKNWLENMPPQSIIGDVICYSPPPFKGSVLSRLKKESFCPT) folds into the LRRCT 1 domain. The LRRNT 2 domain occupies 319-360 (PSTQLPVPYCPIPCNCKVLSPSGLLIHCQERNIESLSDLQPP). LRR repeat units lie at residues 363 to 384 (NPRK…DLTD), 387 to 408 (TLEM…SFMN), 411 to 432 (RLQK…MFLG), 435 to 456 (SLEY…TFNP), 459 to 480 (KLKV…IFLG), and 482 to 503 (PLTR…NILD). The region spanning 516 to 567 (NPWDCSCDLVGLQQWIHKLGKGTMTDDILCTSPGHLDKKELKALNSDLLCPG) is the LRRCT 2 domain. A helical membrane pass occupies residues 610–630 (ILGLLIVFITIVFCAAGIVVF). The Cytoplasmic portion of the chain corresponds to 631–840 (VLHRRRRYKK…DYLEVLEQQT (210 aa)). The segment covering 717–726 (QRSLLERENH) has biased composition (basic and acidic residues). The disordered stretch occupies residues 717–736 (QRSLLERENHSPLTGSNMKY). Residues 727–736 (SPLTGSNMKY) are compositionally biased toward polar residues.

The protein belongs to the SLITRK family. In the embryo, expressed in otic cyst, lateral trunk epidermis and underlying mesodermal tissue, limb bud, maxillary process, cochlea, retina, tongue, tooth primordium, central nervous system, and primordia of visceral organs including lung, gastrointestinal tract and pancreas. In the central nervous system, expressed primarily in dorsal thalamus, cerebellum and medulla.

The protein resides in the cell membrane. Its function is as follows. Regulator of neurite outgrowth required for normal hearing and vision. In Mus musculus (Mouse), this protein is SLIT and NTRK-like protein 6 (Slitrk6).